A 497-amino-acid polypeptide reads, in one-letter code: Signal recognition particle subunit SRP54 2 (497 aa).

Positions 1–297 (MVLAELGGRI…DAKPFVSRLL (297 aa)) are G-domain. Residues 108–117 (GLQGEVLEKP), 192–196 (DTSGR), and 250–253 (TKMD) each bind GTP. Residues 298-497 (GNGDMSGFVN…LMGMFGGRDE (200 aa)) are M-domain.

Belongs to the GTP-binding SRP family. SRP54 subfamily. Component of a signal recognition particle (SRP) complex that consists of a 7SL RNA molecule of 300 nucleotides and six protein subunits: SRP72, SRP68, SRP54, SRP19, SRP14 and SRP9.

The protein resides in the cytoplasm. The protein localises to the endoplasmic reticulum. It catalyses the reaction GTP + H2O = GDP + phosphate + H(+). Functionally, component of the signal recognition particle (SRP) complex, a ribonucleoprotein complex that mediates the cotranslational targeting of secretory and membrane proteins to the endoplasmic reticulum (ER). As part of the SRP complex, associates with the SRP receptor (SR) component SRPRA to target secretory proteins to the endoplasmic reticulum membrane. Binds to the signal sequence of presecretory proteins when they emerge from the ribosomes. Displays basal GTPase activity, and stimulates reciprocal GTPase activation of the SR subunit SRPRA. Forms a guanosine 5'-triphosphate (GTP)-dependent complex with the SR subunit SRPRA. SR compaction and GTPase mediated rearrangement of SR drive SRP-mediated cotranslational protein translocation into the ER. Requires the presence of SRP9/SRP14 and/or SRP19 to stably interact with RNA. The protein is Signal recognition particle subunit SRP54 2 (SRP-54B) of Arabidopsis thaliana (Mouse-ear cress).